A 264-amino-acid polypeptide reads, in one-letter code: Acyl-[acyl-carrier-protein]--UDP-N-acetylglucosamine O-acyltransferase (264 aa).

This sequence belongs to the transferase hexapeptide repeat family. LpxA subfamily. As to quaternary structure, homotrimer.

Its subcellular location is the cytoplasm. The enzyme catalyses a (3R)-hydroxyacyl-[ACP] + UDP-N-acetyl-alpha-D-glucosamine = a UDP-3-O-[(3R)-3-hydroxyacyl]-N-acetyl-alpha-D-glucosamine + holo-[ACP]. The protein operates within glycolipid biosynthesis; lipid IV(A) biosynthesis; lipid IV(A) from (3R)-3-hydroxytetradecanoyl-[acyl-carrier-protein] and UDP-N-acetyl-alpha-D-glucosamine: step 1/6. Functionally, involved in the biosynthesis of lipid A, a phosphorylated glycolipid that anchors the lipopolysaccharide to the outer membrane of the cell. In Chlorobaculum parvum (strain DSM 263 / NCIMB 8327) (Chlorobium vibrioforme subsp. thiosulfatophilum), this protein is Acyl-[acyl-carrier-protein]--UDP-N-acetylglucosamine O-acyltransferase.